Consider the following 58-residue polypeptide: Cholecystokinins (58 aa).

At Y52 the chain carries Sulfotyrosine. Phenylalanine amide is present on F58.

The protein belongs to the gastrin/cholecystokinin family. In terms of assembly, binds to CCK-A receptors in the pancreas and CCK-B receptors in the brain. cholecystokinin 8 binds CCK-A receptors more potently than cholecystokinin 58, cholecystokinin 8 and cholecystokinin 58 bind CCK-B receptors with equal affinity. In terms of processing, the precursor is cleaved by proteases to produce a number of active cholecystokinins. Cholecystokinin 58 occurs in both sulfated (CCK58(s)) and nonsulfated (CCK58(ns)) forms, which differ in their receptor-binding activities. CCK58(s) binds to the CCK-A receptor with high affinity, CCK58(ns) binds poorly to the CCK-A receptor. CCK58(s) and CCK58(ns) both bind the CCK-B receptor. Post-translationally, the precursor is cleaved by ACE, which removes the Gly-Arg-Arg peptide at the C-terminus, leading to mature hormone.

Its subcellular location is the secreted. Its function is as follows. This peptide hormone induces gall bladder contraction and the release of pancreatic enzymes in the gut. Its function in the brain is not clear. Binding to CCK-A receptors stimulates amylase release from the pancreas, binding to CCK-B receptors stimulates gastric acid secretion. cholecystokinin 58 and cholecystokinin 8, but not cholecystokinin 58 desnonopeptide, stimulate amylase release from the pancreas. cholecystokinin 58, but not cholecystokinin 8, increases bile-pancreatic volume. This is Cholecystokinins from Canis lupus familiaris (Dog).